A 787-amino-acid chain; its full sequence is Probable basic-leucine zipper transcription factor J (787 aa).

The span at 18–90 shows a compositional bias: low complexity; it reads NSNIHNNTHN…NNTQNTNNGT (73 aa). Disordered stretches follow at residues 18 to 95, 153 to 173, 186 to 306, 343 to 372, 401 to 441, and 473 to 507; these read NSNI…LTPL, LNLSSTGNHEDPVQVPMNNNP, LQSQ…NNNT, DSLLNQTLNNNNNNNNNNNNNNNNTTIQTS, LSSA…NNSN, and ASSESAQSESSQESDYDALNERNSGVKKRGRDEDQ. 4 stretches are compositionally biased toward low complexity: residues 186 to 223, 235 to 258, 273 to 305, and 351 to 366; these read LQSQNNNSSNNNNNNNNNGSNTPLNGSNGSNNNYSSPI, SSPIQEYPYYSPSSSPHSNESTSP, NNNNNNNNNNNNNNNNNNNNNNNNNNKNNLNNN, and NNNNNNNNNNNNNNNN. Positions 473–483 are enriched in low complexity; it reads ASSESAQSESS. Residues 549–612 enclose the bZIP domain; sequence ELKKQRRLVK…KALKKQLYSL (64 aa). The basic motif stretch occupies residues 551–603; it reads KKQRRLVKNREYASQSRSRRKIYVENIETKLQKTNQDCASIKSQLNSVKEENK. A leucine-zipper region spans residues 605-612; it reads LKKQLYSL. Disordered regions lie at residues 723–747 and 763–787; these read SNYIINNNNNESTSETTTNNKVVST and DKEVPQKCKDSSDLKCDSPPLSPLN. The segment covering 763-778 has biased composition (basic and acidic residues); the sequence is DKEVPQKCKDSSDLKC.

This sequence belongs to the bZIP family.

The protein localises to the nucleus. Its function is as follows. Probable transcriptional regulator. The chain is Probable basic-leucine zipper transcription factor J (bzpJ) from Dictyostelium discoideum (Social amoeba).